The sequence spans 160 residues: Large ribosomal subunit protein eL21 (160 aa).

Composition is skewed to basic and acidic residues over residues 112-123 (NDQKKKEAKEKG) and 136-145 (REAHFVRTNG). Residues 112-145 (NDQKKKEAKEKGTWVQLKRQPAPPREAHFVRTNG) are disordered.

This sequence belongs to the eukaryotic ribosomal protein eL21 family. As to quaternary structure, component of the large ribosomal subunit.

Its subcellular location is the cytoplasm. The protein localises to the cytosol. It localises to the endoplasmic reticulum. Functionally, component of the large ribosomal subunit. The ribosome is a large ribonucleoprotein complex responsible for the synthesis of proteins in the cell. This chain is Large ribosomal subunit protein eL21 (RPL21), found in Capra hircus (Goat).